A 248-amino-acid polypeptide reads, in one-letter code: 1-(5-phosphoribosyl)-5-[(5-phosphoribosylamino)methylideneamino] imidazole-4-carboxamide isomerase (248 aa).

Aspartate 7 functions as the Proton acceptor in the catalytic mechanism. Aspartate 131 functions as the Proton donor in the catalytic mechanism.

The protein belongs to the HisA/HisF family.

The protein resides in the cytoplasm. The catalysed reaction is 1-(5-phospho-beta-D-ribosyl)-5-[(5-phospho-beta-D-ribosylamino)methylideneamino]imidazole-4-carboxamide = 5-[(5-phospho-1-deoxy-D-ribulos-1-ylimino)methylamino]-1-(5-phospho-beta-D-ribosyl)imidazole-4-carboxamide. Its pathway is amino-acid biosynthesis; L-histidine biosynthesis; L-histidine from 5-phospho-alpha-D-ribose 1-diphosphate: step 4/9. The chain is 1-(5-phosphoribosyl)-5-[(5-phosphoribosylamino)methylideneamino] imidazole-4-carboxamide isomerase from Baumannia cicadellinicola subsp. Homalodisca coagulata.